Here is a 406-residue protein sequence, read N- to C-terminus: FBD-associated F-box protein At1g60410 (406 aa).

An F-box domain is found at 9-59 (KDRLSDLPCHLLCRILSNLSTKESVRTSVLSPRWSNLWSLVSVLDLDFQDF). The FBD domain maps to 355–405 (MEEIKLSPVPQCVLSSLDFLQLKAPSTPSKMKLATYFRKKCTRLTKMLLSG).

The sequence is that of FBD-associated F-box protein At1g60410 from Arabidopsis thaliana (Mouse-ear cress).